A 177-amino-acid chain; its full sequence is Large ribosomal subunit protein uL6 (177 aa).

It belongs to the universal ribosomal protein uL6 family. As to quaternary structure, part of the 50S ribosomal subunit.

Its function is as follows. This protein binds to the 23S rRNA, and is important in its secondary structure. It is located near the subunit interface in the base of the L7/L12 stalk, and near the tRNA binding site of the peptidyltransferase center. The protein is Large ribosomal subunit protein uL6 of Rickettsia rickettsii (strain Iowa).